We begin with the raw amino-acid sequence, 210 residues long: Riboflavin kinase (210 aa).

The segment at 1-81 is H-T-H motif-like; the sequence is MECKERRLIG…DLLRYFNIAS (81 aa). The segment at 82–210 is riboflavin kinase; that stretch reads IRLIGRVISG…GDIVEVEILL (129 aa). Residue 91–96 coordinates CDP; sequence GLGEGA. Positions 120 and 122 each coordinate Mg(2+). FMN contacts are provided by Thr177 and Glu185. 190–193 contacts CDP; the sequence is VKLR.

This sequence belongs to the archaeal riboflavin kinase family. The cofactor is Mg(2+).

It carries out the reaction riboflavin + CTP = CDP + FMN + H(+). Its pathway is cofactor biosynthesis; FMN biosynthesis; FMN from riboflavin (CTP route): step 1/1. In terms of biological role, catalyzes the CTP-dependent phosphorylation of riboflavin (vitamin B2) to form flavin mononucleotide (FMN). The sequence is that of Riboflavin kinase (ribK) from Pyrobaculum aerophilum (strain ATCC 51768 / DSM 7523 / JCM 9630 / CIP 104966 / NBRC 100827 / IM2).